A 458-amino-acid polypeptide reads, in one-letter code: Monomethylamine methyltransferase MtmB2 (458 aa).

Position 202 (Pyl202) is a non-standard amino acid, pyrrolysine.

Belongs to the monomethylamine methyltransferase family. In terms of assembly, can form a complex with MtmC (MtmC1 or MtmC2).

The catalysed reaction is Co(I)-[methylamine-specific corrinoid protein] + methylamine + H(+) = methyl-Co(III)-[methylamine-specific corrinoid protein] + NH4(+). The protein operates within one-carbon metabolism; methanogenesis from methylamine. In terms of biological role, catalyzes the transfer of the methyl group from monomethylamine to the corrinoid cofactor of MtmC (MtmC1 or MtmC2). The sequence is that of Monomethylamine methyltransferase MtmB2 (mtmB2) from Methanosarcina barkeri.